Reading from the N-terminus, the 796-residue chain is U-box domain-containing protein 51 (796 aa).

Disordered regions lie at residues 163–195 (DMDTETSIADDRSESRFSSDSHSGTVSSTSSHQ), 218–240 (TNIGKQNNEPHHHHHNRAGSLDV), and 270–292 (RSSQMEEASSSSTYSDPTSSSSQ). The span at 171-181 (ADDRSESRFSS) shows a compositional bias: basic and acidic residues. Low complexity predominate over residues 182–195 (DSHSGTVSSTSSHQ). The segment covering 270-291 (RSSQMEEASSSSTYSDPTSSSS) has biased composition (low complexity). Residues 298–407 (ELEKLKIELR…QRLEDALEGG (110 aa)) adopt a coiled-coil conformation. A Protein kinase domain is found at 429–700 (FSDELKIGVG…DLGKEILPVL (272 aa)). Residues 435–443 (IGVGGYGSV) and lysine 456 each bind ATP. Aspartate 557 (proton acceptor) is an active-site residue. The region spanning 724–796 (NAPTHFYCPI…IKEWRSQLIK (73 aa)) is the U-box domain.

Belongs to the protein kinase superfamily. Ser/Thr protein kinase family.

The catalysed reaction is L-seryl-[protein] + ATP = O-phospho-L-seryl-[protein] + ADP + H(+). It carries out the reaction L-threonyl-[protein] + ATP = O-phospho-L-threonyl-[protein] + ADP + H(+). The enzyme catalyses S-ubiquitinyl-[E2 ubiquitin-conjugating enzyme]-L-cysteine + [acceptor protein]-L-lysine = [E2 ubiquitin-conjugating enzyme]-L-cysteine + N(6)-ubiquitinyl-[acceptor protein]-L-lysine.. It participates in protein modification; protein ubiquitination. Functions as an E3 ubiquitin ligase. This chain is U-box domain-containing protein 51 (PUB51), found in Arabidopsis thaliana (Mouse-ear cress).